Reading from the N-terminus, the 342-residue chain is Biotin synthase (342 aa).

The Radical SAM core domain occupies 36–260; that stretch reads NRIQISTLLS…MMPKSYIRLS (225 aa). Residues cysteine 51, cysteine 55, and cysteine 58 each contribute to the [4Fe-4S] cluster site. The [2Fe-2S] cluster site is built by cysteine 95, cysteine 126, cysteine 186, and arginine 258.

This sequence belongs to the radical SAM superfamily. Biotin synthase family. In terms of assembly, homodimer. [4Fe-4S] cluster is required as a cofactor. It depends on [2Fe-2S] cluster as a cofactor.

The enzyme catalyses (4R,5S)-dethiobiotin + (sulfur carrier)-SH + 2 reduced [2Fe-2S]-[ferredoxin] + 2 S-adenosyl-L-methionine = (sulfur carrier)-H + biotin + 2 5'-deoxyadenosine + 2 L-methionine + 2 oxidized [2Fe-2S]-[ferredoxin]. It participates in cofactor biosynthesis; biotin biosynthesis; biotin from 7,8-diaminononanoate: step 2/2. In terms of biological role, catalyzes the conversion of dethiobiotin (DTB) to biotin by the insertion of a sulfur atom into dethiobiotin via a radical-based mechanism. The chain is Biotin synthase from Buchnera aphidicola subsp. Schizaphis graminum (strain Sg).